The following is a 1086-amino-acid chain: Phosphinothricin tripeptide synthetase PhsC (1086 aa).

The segment at 22 to 43 is disordered; that stretch reads RLRAAAAPGPDPAIPRRPDDDG. The condensation stretch occupies residues 45–484; it reads VPLSFAQHRL…LAALPVLTRD (440 aa). The adenylation stretch occupies residues 510–901; it reads LEDSARRHPD…GRTDHQVKLR (392 aa). Residues 983-1007 form a disordered region; that stretch reads GKLDREALPDPLAQSGDTAGNRPPL. A Carrier domain is found at 1006–1081; the sequence is PLLDPVEERI…GLARSVSAER (76 aa). An O-(pantetheine 4'-phosphoryl)serine modification is found at S1041.

The protein belongs to the NRP synthetase family. Pantetheine 4'-phosphate is required as a cofactor.

It carries out the reaction holo-[peptidyl-carrier protein] + L-alanine + ATP = L-alanyl-[peptidyl-carrier protein] + AMP + diphosphate. The protein operates within secondary metabolite biosynthesis; bialaphos biosynthesis. Functionally, involved in the biosynthesis of phosphinothricin tripeptide (PTT), also known as bialaphos (BA), a natural-product antibiotic and potent herbicide. Adenylates L-alanine and loads it onto a peptidyl carrier domain via a thioester linkage to the phosphopanthetheine moiety. Shows weaker activity with aminobutyric acid and L-serine. The chain is Phosphinothricin tripeptide synthetase PhsC from Streptomyces viridochromogenes (strain DSM 40736 / JCM 4977 / BCRC 1201 / Tue 494).